The sequence spans 387 residues: Phosphoglycerate kinase (387 aa).

Residues 21-23 (DLN), arginine 36, 59-62 (HLGR), arginine 113, and arginine 146 each bind substrate. Residues lysine 197, glutamate 314, and 340-343 (GGDT) each bind ATP.

The protein belongs to the phosphoglycerate kinase family. As to quaternary structure, monomer.

The protein localises to the cytoplasm. It catalyses the reaction (2R)-3-phosphoglycerate + ATP = (2R)-3-phospho-glyceroyl phosphate + ADP. It participates in carbohydrate degradation; glycolysis; pyruvate from D-glyceraldehyde 3-phosphate: step 2/5. The chain is Phosphoglycerate kinase from Pseudomonas fluorescens (strain ATCC BAA-477 / NRRL B-23932 / Pf-5).